A 66-amino-acid chain; its full sequence is Large ribosomal subunit protein bL33c (66 aa).

This sequence belongs to the bacterial ribosomal protein bL33 family.

The protein localises to the plastid. It is found in the chloroplast. The polypeptide is Large ribosomal subunit protein bL33c (Vitis vinifera (Grape)).